A 389-amino-acid polypeptide reads, in one-letter code: Aminomethyltransferase (389 aa).

This sequence belongs to the GcvT family. As to quaternary structure, the glycine cleavage system is composed of four proteins: P, T, L and H.

It carries out the reaction N(6)-[(R)-S(8)-aminomethyldihydrolipoyl]-L-lysyl-[protein] + (6S)-5,6,7,8-tetrahydrofolate = N(6)-[(R)-dihydrolipoyl]-L-lysyl-[protein] + (6R)-5,10-methylene-5,6,7,8-tetrahydrofolate + NH4(+). The glycine cleavage system catalyzes the degradation of glycine. In Corynebacterium jeikeium (strain K411), this protein is Aminomethyltransferase.